Consider the following 144-residue polypeptide: Protein NrdI (144 aa).

It belongs to the NrdI family.

Functionally, probably involved in ribonucleotide reductase function. This is Protein NrdI from Streptococcus pyogenes serotype M4 (strain MGAS10750).